An 84-amino-acid chain; its full sequence is U4-theraphotoxin-Hhn1ac (84 aa).

The signal sequence occupies residues 1–22; it reads MKVTLIAILTCAAVLVLHTTAA. A propeptide spanning residues 23–47 is cleaved from the precursor; it reads EELEESQLMEVGMPDTELAAVDEER. 3 disulfides stabilise this stretch: cysteine 51–cysteine 65, cysteine 55–cysteine 76, and cysteine 70–cysteine 81.

Belongs to the neurotoxin 12 (Hwtx-2) family. 02 (Hwtx-2) subfamily. Expressed by the venom gland.

It is found in the secreted. In terms of biological role, postsynaptic neurotoxin. This Cyriopagopus hainanus (Chinese bird spider) protein is U4-theraphotoxin-Hhn1ac.